A 147-amino-acid polypeptide reads, in one-letter code: MTRKQKRLSVIVGGLAFLGAATGLTFYALGQKASYFYMPADLTTASVQPGQRIRLGGLVEKGTIQRGQGATVAFSVTDTHKSVKVTYTGILPDLFREEQGVITEGSFGPDGVFVADSVLAKHDERYMPKEVADGLKAKGVWQESKSE.

Over 1 to 7 (MTRKQKR) the chain is Cytoplasmic. Residues 8–28 (LSVIVGGLAFLGAATGLTFYA) form a helical; Signal-anchor for type II membrane protein membrane-spanning segment. Topologically, residues 29-147 (LGQKASYFYM…KGVWQESKSE (119 aa)) are periplasmic. Positions 122 and 126 each coordinate heme.

This sequence belongs to the CcmE/CycJ family.

The protein localises to the cell inner membrane. Its function is as follows. Heme chaperone required for the biogenesis of c-type cytochromes. Transiently binds heme delivered by CcmC and transfers the heme to apo-cytochromes in a process facilitated by CcmF and CcmH. The sequence is that of Cytochrome c-type biogenesis protein CcmE from Mesorhizobium japonicum (strain LMG 29417 / CECT 9101 / MAFF 303099) (Mesorhizobium loti (strain MAFF 303099)).